A 276-amino-acid polypeptide reads, in one-letter code: Ribosomal RNA small subunit methyltransferase A (276 aa).

The S-adenosyl-L-methionine site is built by Asn28, Leu30, Gly55, Glu77, Asp103, and Asn124.

Belongs to the class I-like SAM-binding methyltransferase superfamily. rRNA adenine N(6)-methyltransferase family. RsmA subfamily.

The protein localises to the cytoplasm. It catalyses the reaction adenosine(1518)/adenosine(1519) in 16S rRNA + 4 S-adenosyl-L-methionine = N(6)-dimethyladenosine(1518)/N(6)-dimethyladenosine(1519) in 16S rRNA + 4 S-adenosyl-L-homocysteine + 4 H(+). In terms of biological role, specifically dimethylates two adjacent adenosines (A1518 and A1519) in the loop of a conserved hairpin near the 3'-end of 16S rRNA in the 30S particle. May play a critical role in biogenesis of 30S subunits. The polypeptide is Ribosomal RNA small subunit methyltransferase A (Agrobacterium fabrum (strain C58 / ATCC 33970) (Agrobacterium tumefaciens (strain C58))).